Consider the following 251-residue polypeptide: Endonuclease NucS (251 aa).

Basic and acidic residues predominate over residues 230 to 240 (LEPPKKGNEKR). Positions 230–251 (LEPPKKGNEKRSKQKTLDFFTP) are disordered.

The protein belongs to the NucS endonuclease family. As to quaternary structure, homodimer. Interacts with PCNA.

Its subcellular location is the cytoplasm. Its activity is regulated as follows. Activity is modulated by PCNA. PCNA increases the binding affinity of NucS towards ssDNA as well as branched DNA substrates carrying either 3' or 5' flaps. PCNA is also required for optimal loading of NucS on its substrates and to direct activity towards ss/dsDNA junction. In terms of biological role, cleaves both 3' and 5' ssDNA extremities of branched DNA structures. Binds to ssDNA. This is Endonuclease NucS from Pyrococcus abyssi (strain GE5 / Orsay).